The primary structure comprises 159 residues: Protein HydD (159 aa).

It belongs to the peptidase A31 family.

The chain is Protein HydD (hydD) from Wolinella succinogenes (strain ATCC 29543 / DSM 1740 / CCUG 13145 / JCM 31913 / LMG 7466 / NCTC 11488 / FDC 602W) (Vibrio succinogenes).